A 72-amino-acid polypeptide reads, in one-letter code: Translation initiation factor IF-1 (72 aa).

Residues 1–72 (MSKDDCIEFE…TKGRIIYRMK (72 aa)) form the S1-like domain.

The protein belongs to the IF-1 family. In terms of assembly, component of the 30S ribosomal translation pre-initiation complex which assembles on the 30S ribosome in the order IF-2 and IF-3, IF-1 and N-formylmethionyl-tRNA(fMet); mRNA recruitment can occur at any time during PIC assembly.

It is found in the cytoplasm. Functionally, one of the essential components for the initiation of protein synthesis. Stabilizes the binding of IF-2 and IF-3 on the 30S subunit to which N-formylmethionyl-tRNA(fMet) subsequently binds. Helps modulate mRNA selection, yielding the 30S pre-initiation complex (PIC). Upon addition of the 50S ribosomal subunit IF-1, IF-2 and IF-3 are released leaving the mature 70S translation initiation complex. The protein is Translation initiation factor IF-1 of Xylella fastidiosa (strain 9a5c).